The chain runs to 737 residues: Pentatricopeptide repeat-containing protein At3g49740 (737 aa).

19 PPR repeats span residues 20–55 (TLLN…TLRP), 56–90 (DQYS…GLLC), 91–121 (HSHV…IDEP), 122–152 (DVYS…MPER), 154–188 (DVAI…GVRH), 189–222 (DKFG…GFFI), 223–253 (ASSV…TDVA), 256–289 (DQVT…SLRP), 290–321 (TDLT…GYEK), 322–352 (YTLV…LEEK), 353–387 (DLVT…GVKP), 388–418 (DEFT…FGLS), 420–454 (KIEI…NLIS), 455–485 (WNAI…EVRI), 488–522 (DAYT…GQFK), 523–553 (ETLI…MSEK), 554–588 (DVVS…GKVI), 590–620 (DAAT…MVEF), and 626–656 (NVDH…SEKT). The interval 663–737 (VWWALFSACA…KQRGCSWMRL (75 aa)) is type E motif; degenerate.

The protein belongs to the PPR family. PCMP-E subfamily.

This Arabidopsis thaliana (Mouse-ear cress) protein is Pentatricopeptide repeat-containing protein At3g49740 (PCMP-E84).